The primary structure comprises 149 residues: MFSPQSRLRHAVADTFAMVVYCSVVNMLIEIFLSGMSFEQSLSSRLVAIPVNILIAWPYGVYRDLIMRVARKASPAGWAKNLADVLAYVTFQSPVYIIILLTVGAGWHQIVAAVSSNIVVSMLMGAVYGYFLDYCRRLFKVSSYHQAKA.

4 consecutive transmembrane segments (helical) span residues 16-36, 46-66, 83-105, and 115-135; these read FAMVVYCSVVNMLIEIFLSGM, LVAIPVNILIAWPYGVYRDLI, ADVLAYVTFQSPVYIIILLTVGA, and SSNIVVSMLMGAVYGYFLDYC.

It belongs to the AlaE exporter family.

It localises to the cell inner membrane. In terms of biological role, exports L-alanine. In Salmonella typhimurium (strain LT2 / SGSC1412 / ATCC 700720), this protein is L-alanine exporter AlaE.